Reading from the N-terminus, the 720-residue chain is Phenylalanine--tRNA ligase beta subunit, chloroplastic (720 aa).

A B5 domain is found at 319–404; the sequence is NSTLNIDISL…RVYGYNQFQS (86 aa). Mg(2+)-binding residues include Asp-382, Asp-388, Glu-391, and Glu-392. One can recognise an FDX-ACB domain in the interval 626–719; that stretch reads SKYPCITRDL…IIKKLNLEIR (94 aa).

This sequence belongs to the phenylalanyl-tRNA synthetase beta subunit family. Type 1 subfamily. Tetramer of two alpha and two beta subunits. The cofactor is Mg(2+).

It is found in the plastid. The protein resides in the chloroplast. The enzyme catalyses tRNA(Phe) + L-phenylalanine + ATP = L-phenylalanyl-tRNA(Phe) + AMP + diphosphate + H(+). The sequence is that of Phenylalanine--tRNA ligase beta subunit, chloroplastic (pheT) from Porphyra purpurea (Red seaweed).